A 146-amino-acid polypeptide reads, in one-letter code: Phage-like element PBSX protein XkdJ (146 aa).

It to B.subtilis YqbJ.

The protein is Phage-like element PBSX protein XkdJ (xkdJ) of Bacillus subtilis (strain 168).